Reading from the N-terminus, the 395-residue chain is Sensor protein DltS (395 aa).

2 consecutive transmembrane segments (helical) span residues 9–29 (FVFL…AVSN) and 136–156 (FLIL…SLYL). Positions 177 to 387 (DASHELKTPI…RLEVQLPIDG (211 aa)) constitute a Histidine kinase domain. Position 180 is a phosphohistidine; by autocatalysis (His180).

It localises to the cell membrane. It catalyses the reaction ATP + protein L-histidine = ADP + protein N-phospho-L-histidine.. Member of the two-component regulatory system DltS/DltR. Regulates the expression of the dlt operon. Probably phosphorylates DltR. This Streptococcus agalactiae serotype V (strain ATCC BAA-611 / 2603 V/R) protein is Sensor protein DltS (dltS).